The sequence spans 549 residues: Efflux pump patC (549 aa).

Positions 1–12 are enriched in polar residues; the sequence is MAESTAHTSPSL. Positions 1–40 are disordered; that stretch reads MAESTAHTSPSLNDKEREVDQGILSDESGPAEEVKETPDQ. A run of 14 helical transmembrane segments spans residues 50-70, 85-105, 116-136, 146-166, 178-198, 206-226, 252-272, 282-302, 321-341, 360-380, 385-405, 419-439, 460-482, and 526-546; these read LLIC…NTIV, AQLG…ILPL, WLFI…GGAP, VWAG…ITIL, LVGL…GAFA, WGFY…VFLL, VLSA…GVMW, LYVV…FCVL, IALY…VYYI, LLPF…LMPK, VLWY…MYTV, ILLG…PSLV, LLGL…NALL, and VYVM…FLPW.

The protein belongs to the major facilitator superfamily. TCR/Tet family.

The protein resides in the vacuole membrane. Its subcellular location is the cell membrane. In terms of biological role, efflux pump; part of the gene cluster that mediates the biosynthesis of patulin, an acetate-derived tetraketide mycotoxin produced by several fungal species that shows antimicrobial properties against several bacteria. May be involved in the secretion of E-ascladiol to be converted to patulin by the secreted patulin synthase patE. The protein is Efflux pump patC of Aspergillus clavatus (strain ATCC 1007 / CBS 513.65 / DSM 816 / NCTC 3887 / NRRL 1 / QM 1276 / 107).